The following is a 372-amino-acid chain: Actin-related protein T3 (372 aa).

The protein belongs to the actin family. As to quaternary structure, interacts with PFN3. In terms of tissue distribution, ubiquitously expressed.

The protein resides in the cytoplasm. It localises to the cytoskeleton. Its subcellular location is the nucleus. This Homo sapiens (Human) protein is Actin-related protein T3 (ACTRT3).